The sequence spans 88 residues: MITKEQKAQIVAKYGANKKDTGNIFVQIAILTAEIEDLKPHFLANPKDNHSRRGFIAKITKRRILLQHLKKENFELYNKVLAELNLRK.

It belongs to the universal ribosomal protein uS15 family. As to quaternary structure, part of the 30S ribosomal subunit. Forms a bridge to the 50S subunit in the 70S ribosome, contacting the 23S rRNA.

Functionally, one of the primary rRNA binding proteins, it binds directly to 16S rRNA where it helps nucleate assembly of the platform of the 30S subunit by binding and bridging several RNA helices of the 16S rRNA. In terms of biological role, forms an intersubunit bridge (bridge B4) with the 23S rRNA of the 50S subunit in the ribosome. The chain is Small ribosomal subunit protein uS15 from Mycoplasmopsis agalactiae (strain NCTC 10123 / CIP 59.7 / PG2) (Mycoplasma agalactiae).